A 77-amino-acid chain; its full sequence is Conotoxin Vc6c (77 aa).

The N-terminal stretch at 1–22 is a signal peptide; that stretch reads MKLTCMVIVAVLFLTANTFVTA. Residues 23–51 constitute a propeptide that is removed on maturation; the sequence is DDSGNGLENLFSKAHHEIKNPEASNLNKR. 3 disulfide bridges follow: cysteine 52–cysteine 67, cysteine 59–cysteine 71, and cysteine 66–cysteine 76.

In terms of tissue distribution, expressed by the venom duct.

It localises to the secreted. This Conus victoriae (Queen Victoria cone) protein is Conotoxin Vc6c.